The chain runs to 462 residues: Glycoprotein endo-alpha-1,2-mannosidase (462 aa).

The Cytoplasmic segment spans residues 1–8 (MAKFRRGT). Residues 9–29 (CIILALFILFIFSLMMGLKML) form a helical; Signal-anchor for type II membrane protein membrane-spanning segment. The Lumenal portion of the chain corresponds to 30-462 (RPNTATFGAP…YALDHQLPVS (433 aa)). The segment at 60–462 (DFQKSDRINS…YALDHQLPVS (403 aa)) is catalytic.

It belongs to the glycosyl hydrolase 99 family. Undergoes proteolytic cleavage in the C-terminal region.

The protein localises to the golgi apparatus membrane. It carries out the reaction N-{alpha-Glc-(1-&gt;3)-alpha-Man-(1-&gt;2)-alpha-Man-(1-&gt;2)-alpha-Man-(1-&gt;3)-[alpha-Man-(1-&gt;2)-alpha-Man-(1-&gt;3)-[alpha-Man-(1-&gt;2)-alpha-Man-(1-&gt;6)]-alpha-Man-(1-&gt;6)]-beta-Man-(1-&gt;4)-beta-GlcNAc-(1-&gt;4)-beta-GlcNAc}-L-asparaginyl-[protein] + H2O = alpha-D-glucosyl-(1-&gt;3)-D-mannopyranose + N(4)-{alpha-D-Man-(1-&gt;2)-alpha-D-Man-(1-&gt;3)-[alpha-D-Man-(1-&gt;2)-alpha-D-Man-(1-&gt;3)-[alpha-D-Man-(1-&gt;2)-alpha-D-Man-(1-&gt;6)]-alpha-D-Man-(1-&gt;6)]-beta-D-Man-(1-&gt;4)-beta-D-GlaNAc-(1-&gt;4)-beta-D-GlcNAc}-L-asparaginyl-[protein] (N-glucan mannose isomer 8A1,2,3B1,2). In Pongo abelii (Sumatran orangutan), this protein is Glycoprotein endo-alpha-1,2-mannosidase (MANEA).